Reading from the N-terminus, the 211-residue chain is MDHEDMIKVDASVRERCGTGSARALRARGLIPAVIYGKNRDPINISLSQVDFLKKCRTFPIFSKLIELCIGEKKEYVITKDIQKHPVSGAIAHVDFQFVDQDAEMKMEVPLVFLNEQKCVGVKRGGVINILHRSLIIRCSPHHIPKSLEVDLIDVAIGHSLHVSDLKLPSTINVVMKEEDPVIATVVASGGGISEDAEEAAPASDIPEAGK.

It belongs to the bacterial ribosomal protein bL25 family. CTC subfamily. Part of the 50S ribosomal subunit; part of the 5S rRNA/L5/L18/L25 subcomplex. Contacts the 5S rRNA. Binds to the 5S rRNA independently of L5 and L18.

This is one of the proteins that binds to the 5S RNA in the ribosome where it forms part of the central protuberance. This is Large ribosomal subunit protein bL25 from Anaplasma phagocytophilum (strain HZ).